A 426-amino-acid polypeptide reads, in one-letter code: Enolase (426 aa).

Position 162 (glutamine 162) interacts with (2R)-2-phosphoglycerate. The active-site Proton donor is the glutamate 204. The Mg(2+) site is built by aspartate 241, glutamate 284, and aspartate 311. (2R)-2-phosphoglycerate is bound by residues lysine 336, arginine 365, serine 366, and lysine 387. The active-site Proton acceptor is lysine 336.

The protein belongs to the enolase family. Mg(2+) serves as cofactor.

It is found in the cytoplasm. The protein resides in the secreted. It localises to the cell surface. The catalysed reaction is (2R)-2-phosphoglycerate = phosphoenolpyruvate + H2O. The protein operates within carbohydrate degradation; glycolysis; pyruvate from D-glyceraldehyde 3-phosphate: step 4/5. Catalyzes the reversible conversion of 2-phosphoglycerate (2-PG) into phosphoenolpyruvate (PEP). It is essential for the degradation of carbohydrates via glycolysis. The chain is Enolase from Acidithiobacillus ferrooxidans (strain ATCC 23270 / DSM 14882 / CIP 104768 / NCIMB 8455) (Ferrobacillus ferrooxidans (strain ATCC 23270)).